Consider the following 518-residue polypeptide: ATP synthase subunit alpha (518 aa).

ATP is bound at residue 170 to 177; sequence GDRQTGKT.

The protein belongs to the ATPase alpha/beta chains family. In terms of assembly, F-type ATPases have 2 components, CF(1) - the catalytic core - and CF(0) - the membrane proton channel. CF(1) has five subunits: alpha(3), beta(3), gamma(1), delta(1), epsilon(1). CF(0) has three main subunits: a(1), b(2) and c(9-12). The alpha and beta chains form an alternating ring which encloses part of the gamma chain. CF(1) is attached to CF(0) by a central stalk formed by the gamma and epsilon chains, while a peripheral stalk is formed by the delta and b chains.

It is found in the cell membrane. The enzyme catalyses ATP + H2O + 4 H(+)(in) = ADP + phosphate + 5 H(+)(out). Functionally, produces ATP from ADP in the presence of a proton gradient across the membrane. The alpha chain is a regulatory subunit. The sequence is that of ATP synthase subunit alpha from Mycoplasmoides gallisepticum (strain R(low / passage 15 / clone 2)) (Mycoplasma gallisepticum).